Here is a 75-residue protein sequence, read N- to C-terminus: UPF0346 protein LEUM_0763 (75 aa).

It belongs to the UPF0346 family.

The chain is UPF0346 protein LEUM_0763 from Leuconostoc mesenteroides subsp. mesenteroides (strain ATCC 8293 / DSM 20343 / BCRC 11652 / CCM 1803 / JCM 6124 / NCDO 523 / NBRC 100496 / NCIMB 8023 / NCTC 12954 / NRRL B-1118 / 37Y).